We begin with the raw amino-acid sequence, 207 residues long: LexA repressor (207 aa).

The H-T-H motif DNA-binding region spans 28–48; sequence VREIAVAVGLASSSTVHGHLE. Catalysis depends on for autocatalytic cleavage activity residues Ser-129 and Lys-167.

Belongs to the peptidase S24 family. As to quaternary structure, homodimer.

It catalyses the reaction Hydrolysis of Ala-|-Gly bond in repressor LexA.. Represses a number of genes involved in the response to DNA damage (SOS response), including recA and lexA. In the presence of single-stranded DNA, RecA interacts with LexA causing an autocatalytic cleavage which disrupts the DNA-binding part of LexA, leading to derepression of the SOS regulon and eventually DNA repair. The chain is LexA repressor from Oceanobacillus iheyensis (strain DSM 14371 / CIP 107618 / JCM 11309 / KCTC 3954 / HTE831).